The primary structure comprises 273 residues: Formamidopyrimidine-DNA glycosylase (273 aa).

Residue Pro2 is the Schiff-base intermediate with DNA of the active site. Catalysis depends on Glu3, which acts as the Proton donor. Lys58 acts as the Proton donor; for beta-elimination activity in catalysis. Positions 91 and 110 each coordinate DNA. The FPG-type zinc-finger motif lies at 238-272 (QVYGKTGQPCPRCASMIVKIKLGGRGTHLCPHCQK). The active-site Proton donor; for delta-elimination activity is the Arg262.

It belongs to the FPG family. As to quaternary structure, monomer. Zn(2+) serves as cofactor.

The catalysed reaction is Hydrolysis of DNA containing ring-opened 7-methylguanine residues, releasing 2,6-diamino-4-hydroxy-5-(N-methyl)formamidopyrimidine.. The enzyme catalyses 2'-deoxyribonucleotide-(2'-deoxyribose 5'-phosphate)-2'-deoxyribonucleotide-DNA = a 3'-end 2'-deoxyribonucleotide-(2,3-dehydro-2,3-deoxyribose 5'-phosphate)-DNA + a 5'-end 5'-phospho-2'-deoxyribonucleoside-DNA + H(+). In terms of biological role, involved in base excision repair of DNA damaged by oxidation or by mutagenic agents. Acts as a DNA glycosylase that recognizes and removes damaged bases. Has a preference for oxidized purines, such as 7,8-dihydro-8-oxoguanine (8-oxoG). Has AP (apurinic/apyrimidinic) lyase activity and introduces nicks in the DNA strand. Cleaves the DNA backbone by beta-delta elimination to generate a single-strand break at the site of the removed base with both 3'- and 5'-phosphates. In Streptococcus thermophilus (strain ATCC BAA-250 / LMG 18311), this protein is Formamidopyrimidine-DNA glycosylase.